The sequence spans 463 residues: L-seryl-tRNA(Sec) selenium transferase (463 aa).

At K295 the chain carries N6-(pyridoxal phosphate)lysine.

This sequence belongs to the SelA family. Homodecamer; pentamer of dimers. Binds only one seryl-tRNA(Sec) per dimer. The cofactor is pyridoxal 5'-phosphate.

It localises to the cytoplasm. The catalysed reaction is L-seryl-tRNA(Sec) + selenophosphate + H(+) = L-selenocysteinyl-tRNA(Sec) + phosphate. The protein operates within aminoacyl-tRNA biosynthesis; selenocysteinyl-tRNA(Sec) biosynthesis; selenocysteinyl-tRNA(Sec) from L-seryl-tRNA(Sec) (bacterial route): step 1/1. Functionally, converts seryl-tRNA(Sec) to selenocysteinyl-tRNA(Sec) required for selenoprotein biosynthesis. This Escherichia coli O7:K1 (strain IAI39 / ExPEC) protein is L-seryl-tRNA(Sec) selenium transferase.